An 87-amino-acid chain; its full sequence is MGEVKFYLVEGRMLIRHDRMPEWWKFRKYVRALKPEHAVEKVLSELGSNHKVKRYHVKIERVVEVPPEEVPDRTLLVLASLTRWVKP.

This sequence belongs to the eukaryotic ribosomal protein eL20 family. In terms of assembly, part of the 50S ribosomal subunit. Binds 23S rRNA.

This chain is Large ribosomal subunit protein eL20, found in Hyperthermus butylicus (strain DSM 5456 / JCM 9403 / PLM1-5).